A 335-amino-acid polypeptide reads, in one-letter code: Glutamyl-tRNA reductase (335 aa).

Residues 60–63, Ser-110, 115–117, and Gln-121 contribute to the substrate site; these read TCHR and ETE. The active-site Nucleophile is Cys-61. 189–194 serves as a coordination point for NADP(+); that stretch reads GYSEIN.

It belongs to the glutamyl-tRNA reductase family. In terms of assembly, homodimer.

It carries out the reaction (S)-4-amino-5-oxopentanoate + tRNA(Glu) + NADP(+) = L-glutamyl-tRNA(Glu) + NADPH + H(+). It functions in the pathway porphyrin-containing compound metabolism; protoporphyrin-IX biosynthesis; 5-aminolevulinate from L-glutamyl-tRNA(Glu): step 1/2. In terms of biological role, catalyzes the NADPH-dependent reduction of glutamyl-tRNA(Glu) to glutamate 1-semialdehyde (GSA). The chain is Glutamyl-tRNA reductase from Chlamydia trachomatis serovar D (strain ATCC VR-885 / DSM 19411 / UW-3/Cx).